The primary structure comprises 89 residues: uncharacterized protein (89 aa).

Positions 1 to 19 (MQLTKTQFVRCVFLLLANS) are cleaved as a signal peptide.

This is an uncharacterized protein from Sulfolobus islandicus filamentous virus (isolate Iceland/Hveragerdi) (SIFV).